The following is a 429-amino-acid chain: Bifunctional protein GlmU (429 aa).

Residues 1 to 223 (MKTSILILAA…EDEFMGINDK (223 aa)) are pyrophosphorylase. UDP-N-acetyl-alpha-D-glucosamine contacts are provided by residues 8–11 (LAAG), Lys-22, and 81–82 (GT). Asp-102 serves as a coordination point for Mg(2+). Positions 135, 149, 164, and 221 each coordinate UDP-N-acetyl-alpha-D-glucosamine. Position 221 (Asn-221) interacts with Mg(2+). The interval 224-244 (FELSIAENFMQEKIKKYWMQQ) is linker. Positions 245–429 (GVIFHLPQST…KDYYYKKFQK (185 aa)) are N-acetyltransferase. UDP-N-acetyl-alpha-D-glucosamine-binding residues include Arg-308 and Lys-325. The active-site Proton acceptor is His-336. 2 residues coordinate UDP-N-acetyl-alpha-D-glucosamine: Tyr-339 and Asn-350. Residues 359–360 (NY), Ser-378, Ala-396, and Arg-413 contribute to the acetyl-CoA site.

In the N-terminal section; belongs to the N-acetylglucosamine-1-phosphate uridyltransferase family. This sequence in the C-terminal section; belongs to the transferase hexapeptide repeat family. As to quaternary structure, homotrimer. Requires Mg(2+) as cofactor.

It localises to the cytoplasm. The catalysed reaction is alpha-D-glucosamine 1-phosphate + acetyl-CoA = N-acetyl-alpha-D-glucosamine 1-phosphate + CoA + H(+). It catalyses the reaction N-acetyl-alpha-D-glucosamine 1-phosphate + UTP + H(+) = UDP-N-acetyl-alpha-D-glucosamine + diphosphate. Its pathway is nucleotide-sugar biosynthesis; UDP-N-acetyl-alpha-D-glucosamine biosynthesis; N-acetyl-alpha-D-glucosamine 1-phosphate from alpha-D-glucosamine 6-phosphate (route II): step 2/2. It functions in the pathway nucleotide-sugar biosynthesis; UDP-N-acetyl-alpha-D-glucosamine biosynthesis; UDP-N-acetyl-alpha-D-glucosamine from N-acetyl-alpha-D-glucosamine 1-phosphate: step 1/1. It participates in bacterial outer membrane biogenesis; LPS lipid A biosynthesis. Functionally, catalyzes the last two sequential reactions in the de novo biosynthetic pathway for UDP-N-acetylglucosamine (UDP-GlcNAc). The C-terminal domain catalyzes the transfer of acetyl group from acetyl coenzyme A to glucosamine-1-phosphate (GlcN-1-P) to produce N-acetylglucosamine-1-phosphate (GlcNAc-1-P), which is converted into UDP-GlcNAc by the transfer of uridine 5-monophosphate (from uridine 5-triphosphate), a reaction catalyzed by the N-terminal domain. This is Bifunctional protein GlmU from Campylobacter jejuni subsp. jejuni serotype O:23/36 (strain 81-176).